The primary structure comprises 727 residues: MTVSENSVLETEVLVGGSAMPNERPGAMEPQNLSKMPEGFPRRSTVANGVRSRASRRFLVVGGALLLSLFAIYEMGAVFSIGGITPLEYLVLALFAVNFCWIALAFCSGIAGFLILLRKPRAKDLQVTELHTRTAILMPTYNESPDRVFSAVSVMAETLSQTGHGHAFDWFILSDTTDPDIALLEEQAFLVLRQETHKHSRVYYRRRRKNVARKAGNVADFCRRWGSRYDHLLVLDADSLMESSTITGLAQRMQADPDAGLIQTIPSLINGTTLMARLQQFAARIYGPVIGTGLGWWVQKEGNFWGHNAIIRTEAFMTAAGLPNLKGKPPFGGHIMSHDFVEAALIRRAGWSVVIAYDLPGSYEECPPSIIDLAVRDRRWCQGNLQHSRILPTKGLHWVSRLHLLTGIMAYLSSPFWLMLILTGLMLALQAHFIRPEYFTDQFSLFPTWPIMDSDRALRLFYITMGVLFGPKVFGVLLLLKDGEFARSVGGRIKAIFSVIFEVILSALIAPIMMFIHCGAVMSILMGRDSGWSPQRRDDGSMPWMTLIYRHRWHMLAGVMLGYAAILDSLTLLAWMSPALIGLWIAVPISAWTGSVKIGEVFKRAGILATPEERNPAQICLQAHEARAAYQKHIAEPWTLAQVLKDPALMELHLAMVDKQPLRAAGTPIEAMEAIVHVKVHEARCQQSALAVLNRQEMAMVLANPLMLRSLQKLPEQFVEEDLVSFC.

Residues 18 to 38 are disordered; sequence SAMPNERPGAMEPQNLSKMPE. The next 7 helical transmembrane spans lie at 58–78, 97–117, 278–298, 408–428, 460–480, 496–516, and 572–592; these read FLVV…MGAV, VNFC…LILL, LQQF…GWWV, IMAY…LMLA, LFYI…LLLL, IFSV…MMFI, and LLAW…ISAW.

It belongs to the glycosyltransferase 2 family. OpgH subfamily.

The protein resides in the cell inner membrane. It functions in the pathway glycan metabolism; osmoregulated periplasmic glucan (OPG) biosynthesis. Involved in the biosynthesis of osmoregulated periplasmic glucans (OPGs). This chain is Glucans biosynthesis glucosyltransferase H, found in Shewanella baltica (strain OS185).